Here is a 167-residue protein sequence, read N- to C-terminus: Endoribonuclease YbeY (167 aa).

Positions glycine 64–glycine 101 are disordered. Residues glutamate 90–proline 99 are compositionally biased toward acidic residues. Residues histidine 131, histidine 135, and histidine 141 each contribute to the Zn(2+) site.

The protein belongs to the endoribonuclease YbeY family. Requires Zn(2+) as cofactor.

The protein resides in the cytoplasm. In terms of biological role, single strand-specific metallo-endoribonuclease involved in late-stage 70S ribosome quality control and in maturation of the 3' terminus of the 16S rRNA. The protein is Endoribonuclease YbeY of Cereibacter sphaeroides (strain ATCC 17023 / DSM 158 / JCM 6121 / CCUG 31486 / LMG 2827 / NBRC 12203 / NCIMB 8253 / ATH 2.4.1.) (Rhodobacter sphaeroides).